The sequence spans 173 residues: Dual-action ribosomal maturation protein DarP (173 aa).

It belongs to the DarP family.

It is found in the cytoplasm. Its function is as follows. Member of a network of 50S ribosomal subunit biogenesis factors which assembles along the 30S-50S interface, preventing incorrect 23S rRNA structures from forming. Promotes peptidyl transferase center (PTC) maturation. The chain is Dual-action ribosomal maturation protein DarP from Pseudomonas putida (strain GB-1).